We begin with the raw amino-acid sequence, 46 residues long: Denclatoxin-B (46 aa).

Cystine bridges form between Cys3–Cys40, Cys4–Cys32, and Cys16–Cys26.

This sequence belongs to the plant thionin (TC 1.C.44) family.

Its subcellular location is the secreted. In terms of biological role, thionins are small plant proteins which are toxic to animal cells. They seem to exert their toxic effect at the level of the cell membrane. Their precise function is not known. This Dendrophthora clavata (Columbian mistletoe) protein is Denclatoxin-B.